Consider the following 276-residue polypeptide: Vitamin B12-binding protein (276 aa).

A signal peptide spans 1 to 20 (MLVIRLIACTFLFITPSLLA). One can recognise a Fe/B12 periplasmic-binding domain in the interval 27–274 (RIISLAPHAT…QVCTYLKIAQ (248 aa)). Residue Y54 participates in cyanocob(III)alamin binding. A disulfide bridge connects residues C187 and C267.

Belongs to the BtuF family. The complex is composed of two ATP-binding proteins (BtuD), two transmembrane proteins (BtuC) and a solute-binding protein (BtuF).

The protein localises to the periplasm. In terms of biological role, part of the ABC transporter complex BtuCDF involved in vitamin B12 import. Binds vitamin B12 and delivers it to the periplasmic surface of BtuC. The polypeptide is Vitamin B12-binding protein (Vibrio cholerae serotype O1 (strain ATCC 39541 / Classical Ogawa 395 / O395)).